The following is a 406-amino-acid chain: Argininosuccinate synthase (406 aa).

Residues 11–19 (AYSGGLDTS) and A38 each bind ATP. 2 residues coordinate L-citrulline: Y91 and S96. G121 is an ATP binding site. 3 residues coordinate L-aspartate: T123, N127, and D128. Residue N127 coordinates L-citrulline. Positions 131, 181, 190, 266, and 278 each coordinate L-citrulline.

It belongs to the argininosuccinate synthase family. Type 1 subfamily. Homotetramer.

Its subcellular location is the cytoplasm. It carries out the reaction L-citrulline + L-aspartate + ATP = 2-(N(omega)-L-arginino)succinate + AMP + diphosphate + H(+). It functions in the pathway amino-acid biosynthesis; L-arginine biosynthesis; L-arginine from L-ornithine and carbamoyl phosphate: step 2/3. The polypeptide is Argininosuccinate synthase (Campylobacter jejuni (strain RM1221)).